A 1036-amino-acid chain; its full sequence is Vacuolar basic amino acid transporter VSB1 (1036 aa).

At 1–213 (MGRTIRRRRS…SKFAHYLPAA (213 aa)) the chain is on the vacuolar side. 2 positions are modified to phosphoserine: Ser-42 and Ser-127. At Thr-130 the chain carries Phosphothreonine. A phosphoserine mark is found at Ser-140, Ser-144, Ser-149, Ser-152, and Ser-153. A helical membrane pass occupies residues 214–234 (VLGLLLNILDALSYGMIIFPI). Topologically, residues 235-236 (TE) are cytoplasmic. A helical transmembrane segment spans residues 237 to 257 (PVFSHLGPTGISMFYISTIIS). Over 258 to 269 (QAVYSGGWSSFP) the chain is Vacuolar. Residues 270–290 (SGIGSEMIEITPFYHTMALAI) form a helical membrane-spanning segment. At 291-300 (KEALAGNDDE) the chain is on the cytoplasmic side. Residues 301 to 321 (IITTTIFCYVISSMLTGVVFY) traverse the membrane as a helical segment. Over 322–338 (ALGKLRLGKIVGFFPRH) the chain is Vacuolar. A helical membrane pass occupies residues 339 to 359 (ILIGCIGGVGYFLIITGIEVT). At 360–375 (TRVAKFEYSWPFFSGL) the chain is on the cytoplasmic side. The helical transmembrane segment at 376 to 396 (FTDYDTLAKWLLPVLLTVVLI) threads the bilayer. Over 397–405 (GTQRYFKNS) the chain is Vacuolar. Residues 406–426 (LVLPSFYILTLVLFHFIVAII) traverse the membrane as a helical segment. Residues 427–473 (PTLSLDALRQAGWIFPIANSDSKWYDHYRLFNVHKVHWSLVLQQIPT) are Cytoplasmic-facing. The chain crosses the membrane as a helical span at residues 474-494 (MMALTFFGILHVPINVPALAM). At 495–515 (SLQMDKYDVDRELIAHGYSNF) the chain is on the vacuolar side. The helical transmembrane segment at 516–536 (FSGLLGSVQNYLVYTNSVLFI) threads the bilayer. At 537–546 (RAGADSPFAG) the chain is on the cytoplasmic side. A helical transmembrane segment spans residues 547 to 567 (FLLIALTICIMIIGPVIISFI). Position 568 (Pro-568) is a topological domain, vacuolar. Residues 569-589 (ICIVGSLIFLLGYELLVEALV) traverse the membrane as a helical segment. The Cytoplasmic segment spans residues 590–604 (DTWNKLNRFEYLTVV). The chain crosses the membrane as a helical span at residues 605–625 (IIVFTMGIFDFVLGIIVGILI). Residues 626 to 664 (ACFSFLVDSTKLQTINGEYNGNVARSTVYRDYVQTKFLD) are Vacuolar-facing. In terms of domain architecture, STAS spans 660-781 (TKFLDGIGEQ…ADLNSALEWC (122 aa)). A helical membrane pass occupies residues 665-685 (GIGEQIYVLKLQNLLFFGTII). Topologically, residues 686–1036 (SIEEKIERLL…ELLGYTLVSA (351 aa)) are cytoplasmic. Position 842 is a phosphoserine (Ser-842). The residue at position 847 (Thr-847) is a Phosphothreonine.

The protein resides in the vacuole membrane. Its function is as follows. Amino acid transporter involved in vacuolar uptake of basic amino acids for storage during nitrogen replete condititions. May function as an amino acid/proton antiporter. In Saccharomyces cerevisiae (strain ATCC 204508 / S288c) (Baker's yeast), this protein is Vacuolar basic amino acid transporter VSB1.